A 154-amino-acid chain; its full sequence is Myoglobin (154 aa).

One can recognise a Globin domain in the interval 2 to 148; sequence GLSDGEWQIV…FRNDIAAKYK (147 aa). S4 is subject to Phosphoserine. Position 65 (H65) interacts with nitrite. Residue H65 participates in O2 binding. T68 carries the phosphothreonine modification. Residue H94 coordinates heme b.

This sequence belongs to the globin family. In terms of assembly, monomeric.

Its subcellular location is the cytoplasm. The protein localises to the sarcoplasm. The catalysed reaction is Fe(III)-heme b-[protein] + nitric oxide + H2O = Fe(II)-heme b-[protein] + nitrite + 2 H(+). The enzyme catalyses H2O2 + AH2 = A + 2 H2O. Its function is as follows. Monomeric heme protein which primary function is to store oxygen and facilitate its diffusion within muscle tissues. Reversibly binds oxygen through a pentacoordinated heme iron and enables its timely and efficient release as needed during periods of heightened demand. Depending on the oxidative conditions of tissues and cells, and in addition to its ability to bind oxygen, it also has a nitrite reductase activity whereby it regulates the production of bioactive nitric oxide. Under stress conditions, like hypoxia and anoxia, it also protects cells against reactive oxygen species thanks to its pseudoperoxidase activity. In Lycaon pictus (African wild dog), this protein is Myoglobin (MB).